We begin with the raw amino-acid sequence, 241 residues long: uncharacterized protein (241 aa).

The region spanning 22–78 is the Cupin type-2 domain; the sequence is SHKHAYSQFLFPLEGSIDLETEGRQVKLNPDHFLYIPPQCEHRFRSIGRNECLVLDV. In terms of domain architecture, HTH araC/xylS-type spans 137–235; that stretch reads YASIAYIHSH…GMPPRLYRNT (99 aa). 2 consecutive DNA-binding regions (H-T-H motif) follow at residues 154–175 and 202–225; these read KKLA…KKQT and LTVV…TKST.

This is an uncharacterized protein from Bacillus subtilis (strain 168).